A 237-amino-acid polypeptide reads, in one-letter code: Sugar fermentation stimulation protein homolog (237 aa).

This sequence belongs to the SfsA family.

The protein is Sugar fermentation stimulation protein homolog of Methylobacterium radiotolerans (strain ATCC 27329 / DSM 1819 / JCM 2831 / NBRC 15690 / NCIMB 10815 / 0-1).